Consider the following 318-residue polypeptide: Cell surface sensor SHO1 (318 aa).

The segment at 1-23 (MPSYGSLHSPSLRKMEHSRGQYG) is disordered. Residues 1–38 (MPSYGSLHSPSLRKMEHSRGQYGGGRKGMSLGNVIGDP) are Cytoplasmic-facing. Residues 39–59 (FALATISIAGLAWLIAFIASI) traverse the membrane as a helical segment. Topologically, residues 60 to 71 (VAQIQTTQGFPT) are extracellular. The helical transmembrane segment at 72 to 92 (YTWWTVVFYFFLIPGVFVVVA) threads the bilayer. The Cytoplasmic portion of the chain corresponds to 93 to 100 (SDTIQTYH). The helical transmembrane segment at 101 to 121 (VALVGYMACGLVLTTSSVNGL) threads the bilayer. At 122 to 130 (VYSTNGAKE) the chain is on the extracellular side. The helical transmembrane segment at 131 to 151 (AAAAGFILLSMVTIVWIFYFG) threads the bilayer. At 152-318 (SAPSAMPRAY…IAPSNYLILL (167 aa)) the chain is on the cytoplasmic side. The disordered stretch occupies residues 172–255 (TSNNRQTMTG…AGGAADAEIV (84 aa)). Polar residues predominate over residues 190-214 (ETSTSVQPPQMYTSAQLNGFENPSP). Residues 237–250 (GLPKTTTPPAGGAA) show a composition bias toward low complexity. Residues 259–318 (EYPYRAKAIYTYEANPDDANEISFSKHEILEVSDVSGRWWQARKETGETGIAPSNYLILL) form the SH3 domain.

This sequence belongs to the SHO1 family. Forms homooligomers.

Its subcellular location is the cell membrane. In terms of biological role, MSB2 and SHO1 have overlapping functions in recognizing various surface signals for MAPK PMK1 activation and appressorium formation. While MSB2 is critical for sensing surface hydrophobicity and cutin monomers, SHO1 may play a more important role in recognizing rice leaf waxes. This Pyricularia oryzae (strain 70-15 / ATCC MYA-4617 / FGSC 8958) (Rice blast fungus) protein is Cell surface sensor SHO1.